The following is a 595-amino-acid chain: Probable serine/threonine-protein kinase fhkC (595 aa).

Residues 1 to 84 (MNSNKEETTA…MTEDNSKEED (84 aa)) form a disordered region. Positions 18-31 (EEQQQQQQPQQQEQ) are enriched in low complexity. Positions 32-49 (INTTTASTTSNGENTASD) are enriched in polar residues. A compositionally biased stretch (low complexity) spans 50–70 (NNNNSNNNNNNNTNNTNTNNN). In terms of domain architecture, FHA spans 116–170 (IILGRSKGVCNYTFTSPTVSGKHCKIYRDPTVKSRNVAFVDDTSTNGTFINNEVI). Residues 218 to 479 (YDLREVLGTG…IDQALNHPWF (262 aa)) enclose the Protein kinase domain. ATP-binding positions include 224 to 232 (LGTGNFASV) and lysine 247. Aspartate 342 functions as the Proton acceptor in the catalytic mechanism. Threonine 377 carries the post-translational modification Phosphothreonine; by autocatalysis. Positions 494-595 (KLEFPPPSTN…DEHEQKKVKN (102 aa)) are disordered. Positions 508–520 (PTPNTTSSNSQLV) are enriched in polar residues. Positions 530–567 (DNTTDNNNNNNNNNNNNNNNNNNNTTNNSNNIDNNNGN) are enriched in low complexity. A compositionally biased stretch (basic and acidic residues) spans 585–595 (NDEHEQKKVKN).

Belongs to the protein kinase superfamily. CAMK Ser/Thr protein kinase family. CHK2 subfamily.

The enzyme catalyses L-seryl-[protein] + ATP = O-phospho-L-seryl-[protein] + ADP + H(+). It catalyses the reaction L-threonyl-[protein] + ATP = O-phospho-L-threonyl-[protein] + ADP + H(+). This Dictyostelium discoideum (Social amoeba) protein is Probable serine/threonine-protein kinase fhkC (fhkC).